The chain runs to 622 residues: Elongation factor 4 (622 aa).

Positions E17–V198 constitute a tr-type G domain. GTP is bound by residues D29–T34 and N145–D148.

The protein belongs to the TRAFAC class translation factor GTPase superfamily. Classic translation factor GTPase family. LepA subfamily.

The protein localises to the cell membrane. The catalysed reaction is GTP + H2O = GDP + phosphate + H(+). Functionally, required for accurate and efficient protein synthesis under certain stress conditions. May act as a fidelity factor of the translation reaction, by catalyzing a one-codon backward translocation of tRNAs on improperly translocated ribosomes. Back-translocation proceeds from a post-translocation (POST) complex to a pre-translocation (PRE) complex, thus giving elongation factor G a second chance to translocate the tRNAs correctly. Binds to ribosomes in a GTP-dependent manner. This Kineococcus radiotolerans (strain ATCC BAA-149 / DSM 14245 / SRS30216) protein is Elongation factor 4.